Consider the following 151-residue polypeptide: Small ribosomal subunit protein uS15y (151 aa).

It belongs to the universal ribosomal protein uS15 family.

The sequence is that of Small ribosomal subunit protein uS15y (RPS13B) from Arabidopsis thaliana (Mouse-ear cress).